The chain runs to 362 residues: Heme A synthase (362 aa).

Transmembrane regions (helical) follow at residues 12-32 (AVRIWLAIIAGLIAVMVLVGG), 102-122 (VIGAAFLLPFLWFLWRGDLGG), 128-148 (LWIIFGLGALQGAVGWWMVAS), 159-179 (VRLATHLVLALLIFAGIVWTL), and 198-218 (AAVLLGLTFVQLYLGALVAGL). Residue H262 participates in heme binding. 3 helical membrane passes run 264–281 (MLAYALWALAVLHAIDAW), 289–309 (GALALAVAITLQAALGIVTLL), and 312–332 (VPIGLGLAHQAMAILVLTLAV). H320 serves as a coordination point for heme.

Belongs to the COX15/CtaA family. Type 2 subfamily. In terms of assembly, interacts with CtaB. Heme b is required as a cofactor.

The protein resides in the cell membrane. It catalyses the reaction Fe(II)-heme o + 2 A + H2O = Fe(II)-heme a + 2 AH2. It functions in the pathway porphyrin-containing compound metabolism; heme A biosynthesis; heme A from heme O: step 1/1. Functionally, catalyzes the conversion of heme O to heme A by two successive hydroxylations of the methyl group at C8. The first hydroxylation forms heme I, the second hydroxylation results in an unstable dihydroxymethyl group, which spontaneously dehydrates, resulting in the formyl group of heme A. The chain is Heme A synthase from Rhodopseudomonas palustris (strain BisB18).